A 566-amino-acid chain; its full sequence is Urease subunit alpha (566 aa).

The Urease domain maps to 128–566 (GGIDSHVHFI…LPMAQRYFLF (439 aa)). The Ni(2+) site is built by His133, His135, and Lys216. The residue at position 216 (Lys216) is an N6-carboxylysine. His218 contributes to the substrate binding site. Residues His245 and His271 each contribute to the Ni(2+) site. Catalysis depends on His319, which acts as the Proton donor. Asp359 is a Ni(2+) binding site.

Belongs to the metallo-dependent hydrolases superfamily. Urease alpha subunit family. As to quaternary structure, heterotrimer of UreA (gamma), UreB (beta) and UreC (alpha) subunits. Three heterotrimers associate to form the active enzyme. Ni cation serves as cofactor. In terms of processing, carboxylation allows a single lysine to coordinate two nickel ions.

Its subcellular location is the cytoplasm. The enzyme catalyses urea + 2 H2O + H(+) = hydrogencarbonate + 2 NH4(+). It participates in nitrogen metabolism; urea degradation; CO(2) and NH(3) from urea (urease route): step 1/1. The chain is Urease subunit alpha from Nitrosococcus oceani (strain ATCC 19707 / BCRC 17464 / JCM 30415 / NCIMB 11848 / C-107).